A 256-amino-acid chain; its full sequence is uncharacterized protein (256 aa).

A run of 7 helical transmembrane segments spans residues 32 to 52 (ILASIFIGFGITAASKTGSYF), 59 to 79 (FAFPAAAVTFGAAILMIAYGG), 112 to 132 (YAGNLIGAILFAILISATGLF), 156 to 176 (LFFRGMLCNWLVCLAFFIPMS), 184 to 204 (LFTMMLFVFCFFISGFEHSIA), 207 to 227 (CTFAISLLIEHPDTVTLMGAV), and 230 to 250 (LIPVTLGNLTAGIVMMGWMYY).

Belongs to the FNT transporter (TC 1.A.16) family.

The protein resides in the cell membrane. This is an uncharacterized protein from Bacillus subtilis (strain 168).